The chain runs to 777 residues: Protein translocase subunit SecA (777 aa).

Residues Q94, 112 to 116 (GEGKT), and D501 contribute to the ATP site.

Belongs to the SecA family. In terms of assembly, monomer and homodimer. Part of the essential Sec protein translocation apparatus which comprises SecA, SecYEG and auxiliary proteins SecDF. Other proteins may also be involved.

The protein resides in the cell membrane. The protein localises to the cytoplasm. It carries out the reaction ATP + H2O + cellular proteinSide 1 = ADP + phosphate + cellular proteinSide 2.. Part of the Sec protein translocase complex. Interacts with the SecYEG preprotein conducting channel. Has a central role in coupling the hydrolysis of ATP to the transfer of proteins into and across the cell membrane, serving as an ATP-driven molecular motor driving the stepwise translocation of polypeptide chains across the membrane. This is Protein translocase subunit SecA from Mycobacterium avium (strain 104).